A 180-amino-acid chain; its full sequence is Interleukin-17B (180 aa).

The first 20 residues, 1–20, serve as a signal peptide directing secretion; the sequence is MDWPHNLLFLLTISIFLGLG. The segment at 22 to 44 is disordered; that stretch reads PRSPKSKRKGQGRPGPLAPGPHQ. The N-linked (GlcNAc...) asparagine glycan is linked to asparagine 75. Intrachain disulfides connect cysteine 121–cysteine 176 and cysteine 126–cysteine 178.

Belongs to the IL-17 family. As to expression, expressed in adult pancreas, small intestine, stomach, spinal cord and testis. Less pronounced expression in prostate, colon mucosal lining, and ovary.

The protein resides in the secreted. Its function is as follows. Stimulates the release of tumor necrosis factor alpha and IL-1-beta from the monocytic cell line THP-1. The chain is Interleukin-17B (IL17B) from Homo sapiens (Human).